Consider the following 338-residue polypeptide: Cytosolic sulfotransferase 16 (338 aa).

Residue 81–86 participates in 3'-phosphoadenylyl sulfate binding; that stretch reads KTGTTW. The active-site Proton acceptor is His-143. Residues Arg-165, Ser-173, Tyr-231, and 301-303 contribute to the 3'-phosphoadenylyl sulfate site; that span reads RKG.

This sequence belongs to the sulfotransferase 1 family. Highly expressed in roots, stems and mature leaves. Low expression in young leaves and flowers. Barely detected in siliques.

It is found in the cytoplasm. The enzyme catalyses (Z)-desulfoglucotropeolin + 3'-phosphoadenylyl sulfate = (Z)-glucotropeolin + adenosine 3',5'-bisphosphate + H(+). It carries out the reaction (Z)-indolylmethyl desulfoglucosinolate + 3'-phosphoadenylyl sulfate = (Z)-glucobrassicin + adenosine 3',5'-bisphosphate + H(+). Its activity is regulated as follows. Inhibited by phosphoadenosine 5'-phosphate (PAP). Functionally, sulfotransferase that utilizes 3'-phospho-5'-adenylyl sulfate (PAPS) as sulfonate donor to catalyze the sulfate conjugation of desulfo-glucosinolates (dsGSs), the final step in the biosynthesis of the glucosinolate core structure. Substrate preference is desulfo-2-phenylethyl glucosinolate &gt; desulfo-indol-3-yl methyl glucosinolate &gt; desulfo-benzyl glucosinolate &gt; desulfo-6-methylthiohexyl glucosinolate &gt; desulfo-4-methylthiobutyl glucosinolate &gt; desulfo-3-methylthiopropyl glucosinolate &gt; desulfo-singrin &gt; desulfo-3-butenyl glucosinolate. In Arabidopsis thaliana (Mouse-ear cress), this protein is Cytosolic sulfotransferase 16 (SOT16).